We begin with the raw amino-acid sequence, 80 residues long: Protein FAM229B (80 aa).

Positions 1 to 44 (MPFQFGTQPRRFPVEGGDSSIELEPGLSSSAACNGKEMSPTRQL) are disordered.

This sequence belongs to the FAM229 family.

In Homo sapiens (Human), this protein is Protein FAM229B (FAM229B).